The primary structure comprises 232 residues: Large ribosomal subunit protein uL1 (232 aa).

This sequence belongs to the universal ribosomal protein uL1 family. As to quaternary structure, part of the 50S ribosomal subunit.

Its function is as follows. Binds directly to 23S rRNA. The L1 stalk is quite mobile in the ribosome, and is involved in E site tRNA release. Protein L1 is also a translational repressor protein, it controls the translation of the L11 operon by binding to its mRNA. The chain is Large ribosomal subunit protein uL1 from Burkholderia lata (strain ATCC 17760 / DSM 23089 / LMG 22485 / NCIMB 9086 / R18194 / 383).